We begin with the raw amino-acid sequence, 201 residues long: UPF0301 protein MMAR_0053 (201 aa).

This sequence belongs to the UPF0301 (AlgH) family.

This chain is UPF0301 protein MMAR_0053, found in Mycobacterium marinum (strain ATCC BAA-535 / M).